We begin with the raw amino-acid sequence, 671 residues long: Protein cereblon (671 aa).

Over residues 1-11 (MDGEEAADIDE) the composition is skewed to acidic residues. Disordered stretches follow at residues 1-59 (MDGE…VDGD), 104-130 (LTGTTTPTPTAPENQAENAPEIEPAQP), and 150-187 (GHNVLNPGDDARSISSRHSGSDMSLDSPGSEDDSDAEA). Composition is skewed to low complexity over residues 39–51 (QQQQQMPQTSSGE) and 105–115 (TGTTTPTPTAP). Over residues 162-173 (SISSRHSGSDMS) the composition is skewed to polar residues. Positions 309-537 (RMLIFMHQHI…IIGSTLKQES (229 aa)) constitute a Lon N-terminal domain. Positions 536–645 (ESLFYCRYCN…LAGSSVRIGK (110 aa)) constitute a CULT domain. Zn(2+) is bound by residues Cys-541, Cys-544, Cys-610, and Cys-613.

It belongs to the CRBN family. In terms of assembly, likely a component of a DCX (DDB1-CUL4-X-box) protein ligase complex. May interact with pic/DDB1. Post-translationally, ubiquitinated.

The protein resides in the nucleus. It participates in protein modification; protein ubiquitination. In terms of biological role, substrate recognition component of a DCX (DDB1-CUL4-X-box) E3 protein ligase complex that mediates the ubiquitination and subsequent proteasomal degradation of target proteins. Has an essential role in mediating growth by negatively regulating insulin signaling. It also has a role in maintaining presynaptic function in the neuromuscular junction synapses of third-instar larvae. This Drosophila grimshawi (Hawaiian fruit fly) protein is Protein cereblon.